The sequence spans 758 residues: MVRTKNQSSSSSASSSSTKSPIKSSSGAGSSGGGVGGRQSTHRSSSASNVAAVVAGGSSAAGGGSSSNRRSPGSSPDGDDDTTTTDDLTPTTCSPRSGHHHSYGGYSSSVHKQNLYVVSFPIIFLFNVLRSLIYQLFCIFRYLYGASTKVIYRPHRRDCNIEIVVQNSSKEQQQSLNHPSELNREGDGQEQQLSNQPQRFRPIQPLEMAANRPGGGYSPGPGDPLLAKQKHHHRRAFEYISKALKIDEENEGHKELAIELYRKGIKELEDGIAVDCWSGRGDVWDRAQRLHDKMQTNLSMARDRLHFLALREQDLQMQRLSLKEKQKEEARSKPQKSREPMLAGMTNEPMKLRVRSSGYGPKATTSAQPTASGRKLTIGSKRPVNLAVANKSQTLPRNLGSKTSVGAVQRQPAKTAATPPAVRRQFSSGRNTPPQRSRTPINNNGPSGSGASTPVVSVKGVEQKLVQLILDEIVEGGAKVEWTDIAGQDVAKQALQEMVILPSVRPELFTGLRAPAKGLLLFGPPGNGKTLLARAVATECSATFLNISAASLTSKYVGDGEKLVRALFAVARHMQPSIIFIDEVDSLLSERSSSEHEASRRLKTEFLVEFDGLPGNPDGDRIVVLAATNRPQELDEAALRRFTKRVYVSLPDEQTRELLLNRLLQKQGSPLDTEALRRLAKITDGYSGSDLTARPKDAALEPIRELNVEQVKCLDISAMRAITEQDFHSSLKRIRRSVAPQSLNSYEKWSQDYGDITI.

The disordered stretch occupies residues 1–103 (MVRTKNQSSS…SPRSGHHHSY (103 aa)). At 1–121 (MVRTKNQSSS…KQNLYVVSFP (121 aa)) the chain is on the cytoplasmic side. The interval 1–210 (MVRTKNQSSS…RPIQPLEMAA (210 aa)) is required for localization to punctate cytoplasmic foci. Low complexity-rich tracts occupy residues 8 to 28 (SSSS…SSGA), 43 to 58 (RSSS…AGGS), 66 to 76 (SSNRRSPGSSP), and 85 to 95 (TDDLTPTTCSP). The segment at residues 122 to 142 (IIFLFNVLRSLIYQLFCIFRY) is an intramembrane region (helical). Residues 143-758 (LYGASTKVIY…WSQDYGDITI (616 aa)) are Cytoplasmic-facing. Polar residues-rich tracts occupy residues 169-180 (SKEQQQSLNHPS) and 189-198 (QEQQLSNQPQ). The disordered stretch occupies residues 169-202 (SKEQQQSLNHPSELNREGDGQEQQLSNQPQRFRP). Positions 208-758 (MAANRPGGGY…WSQDYGDITI (551 aa)) are sufficient for interaction with microtubules and microtubule severing. An MIT domain is found at 233–308 (HRRAFEYISK…SMARDRLHFL (76 aa)). The span at 323–339 (KEKQKEEARSKPQKSRE) shows a compositional bias: basic and acidic residues. A disordered region spans residues 323-454 (KEKQKEEARS…GPSGSGASTP (132 aa)). Polar residues-rich tracts occupy residues 390 to 406 (NKSQ…TSVG) and 425 to 454 (QFSS…ASTP). The tract at residues 443-455 (NNGPSGSGASTPV) is required for interaction with microtubules. 523-530 (GPPGNGKT) is a binding site for ATP.

This sequence belongs to the AAA ATPase family. Spastin subfamily. In terms of assembly, homohexamer. The homohexamer is stabilized by ATP-binding. The homohexamer may adopt a ring conformation through which microtubules pass prior to being severed. Interacts with microtubules. Interacts with atl; may be involved in microtubule dynamics.

Its subcellular location is the membrane. The protein resides in the cytoplasm. It localises to the cytoskeleton. It is found in the microtubule organizing center. The protein localises to the centrosome. Its subcellular location is the chromosome. The protein resides in the lipid droplet. The enzyme catalyses n ATP + n H2O + a microtubule = n ADP + n phosphate + (n+1) alpha/beta tubulin heterodimers.. ATP-dependent microtubule severing protein. Stimulates microtubule minus-end depolymerization and poleward microtubule flux in the mitotic spindle. Regulates microtubule stability in the neuromuscular junction synapse. Involved in lipid metabolism by regulating the size and distribution of lipid droplets. Involved in axon regeneration by regulating microtubule severing. This Drosophila simulans (Fruit fly) protein is Spastin.